A 132-amino-acid polypeptide reads, in one-letter code: Large ribosomal subunit protein bL21 (132 aa).

A disordered region spans residues 104–132 (GKAPSIGPRPPREKKPVVETSAEADDAAA).

The protein belongs to the bacterial ribosomal protein bL21 family. As to quaternary structure, part of the 50S ribosomal subunit. Contacts protein L20.

Functionally, this protein binds to 23S rRNA in the presence of protein L20. The sequence is that of Large ribosomal subunit protein bL21 from Rhodopseudomonas palustris (strain BisB18).